A 398-amino-acid chain; its full sequence is 1-deoxy-D-xylulose 5-phosphate reductoisomerase (398 aa).

The NADPH site is built by Thr-10, Gly-11, Ser-12, Ile-13, Lys-37, Asn-38, and Asn-124. Position 125 (Lys-125) interacts with 1-deoxy-D-xylulose 5-phosphate. Position 126 (Glu-126) interacts with NADPH. Asp-150 lines the Mn(2+) pocket. 4 residues coordinate 1-deoxy-D-xylulose 5-phosphate: Ser-151, Glu-152, Ser-186, and His-209. Glu-152 is a binding site for Mn(2+). An NADPH-binding site is contributed by Gly-215. 1-deoxy-D-xylulose 5-phosphate contacts are provided by Ser-222, Asn-227, Lys-228, and Glu-231. Glu-231 serves as a coordination point for Mn(2+).

It belongs to the DXR family. Homodimer. Mg(2+) is required as a cofactor. Mn(2+) serves as cofactor.

It catalyses the reaction 2-C-methyl-D-erythritol 4-phosphate + NADP(+) = 1-deoxy-D-xylulose 5-phosphate + NADPH + H(+). It participates in isoprenoid biosynthesis; isopentenyl diphosphate biosynthesis via DXP pathway; isopentenyl diphosphate from 1-deoxy-D-xylulose 5-phosphate: step 1/6. Its function is as follows. Catalyzes the NADPH-dependent rearrangement and reduction of 1-deoxy-D-xylulose-5-phosphate (DXP) to 2-C-methyl-D-erythritol 4-phosphate (MEP). The chain is 1-deoxy-D-xylulose 5-phosphate reductoisomerase from Buchnera aphidicola subsp. Schizaphis graminum (strain Sg).